The primary structure comprises 266 residues: Phosphatidylglycerol--prolipoprotein diacylglyceryl transferase (266 aa).

A run of 7 helical transmembrane segments spans residues 19 to 39 (IWGP…FAFA), 61 to 81 (LMFW…TLFY), 91 to 111 (LYLF…LGVI), 125 to 145 (FLQV…FGRI), 176 to 196 (PSQL…ILWF), 204 to 224 (GAVS…VEFF), and 237 to 257 (GMSM…ILMV). Arg-144 contributes to the a 1,2-diacyl-sn-glycero-3-phospho-(1'-sn-glycerol) binding site.

The protein belongs to the Lgt family.

The protein resides in the cell inner membrane. It carries out the reaction L-cysteinyl-[prolipoprotein] + a 1,2-diacyl-sn-glycero-3-phospho-(1'-sn-glycerol) = an S-1,2-diacyl-sn-glyceryl-L-cysteinyl-[prolipoprotein] + sn-glycerol 1-phosphate + H(+). It functions in the pathway protein modification; lipoprotein biosynthesis (diacylglyceryl transfer). Functionally, catalyzes the transfer of the diacylglyceryl group from phosphatidylglycerol to the sulfhydryl group of the N-terminal cysteine of a prolipoprotein, the first step in the formation of mature lipoproteins. The sequence is that of Phosphatidylglycerol--prolipoprotein diacylglyceryl transferase from Idiomarina loihiensis (strain ATCC BAA-735 / DSM 15497 / L2-TR).